The chain runs to 651 residues: Cytoplasmic tyrosine-protein kinase BMX (651 aa).

The PH domain maps to 4-111 (KSILEELLLK…WLKALQKEIR (108 aa)). The Btk-type zinc-finger motif lies at 113-149 (NPHLLIKYHSGFFVDGKFLCCQQSCKAAPGCTLWEAY). Zn(2+)-binding residues include histidine 121, cysteine 132, cysteine 133, and cysteine 143. The SH2 domain maps to 272–368 (WFAGNISRSQ…GMITRLRHPV (97 aa)). The Protein kinase domain maps to 393–646 (ITLLKELGNG…QLLSAIEPLR (254 aa)). ATP contacts are provided by residues 399–407 (LGNGQFGVV) and lysine 421. Aspartate 512 acts as the Proton acceptor in catalysis. Tyrosine 542 is modified (phosphotyrosine; by SRC and autocatalysis).

It belongs to the protein kinase superfamily. Tyr protein kinase family. TEC subfamily. Interacts with BCAR1, CAV1, MYD88, PTK2/FAK1, RUFY1, RUFY2, STAT3, TIRAP and TNFRSF1B. It depends on Zn(2+) as a cofactor. Post-translationally, phosphorylated in response to protein I/II and to LPS. Phosphorylation at Tyr-542 by SRC and by autocatalysis leads to activation and is required for STAT3 phosphorylation by BMX. In terms of tissue distribution, specifically expressed in the endocardium of the developing heart as well as in the endocardium of the left ventricle and in the endothelium of large arteries in adult mice.

The protein resides in the cytoplasm. The enzyme catalyses L-tyrosyl-[protein] + ATP = O-phospho-L-tyrosyl-[protein] + ADP + H(+). TEK and vascular endothelial growth factor receptor 1 (FLT1) stimulate BMX tyrosine kinase activity. Activated by integrins through the mediation of PTK2/FAK1. Activated by TNF through the mediation of TNFRSF1B. In terms of biological role, non-receptor tyrosine kinase that plays central but diverse modulatory roles in various signaling processes involved in the regulation of actin reorganization, cell migration, cell proliferation and survival, cell adhesion, and apoptosis. Participates in signal transduction stimulated by growth factor receptors, cytokine receptors, G-protein coupled receptors, antigen receptors and integrins. Induces tyrosine phosphorylation of BCAR1 in response to integrin regulation. Activation of BMX by integrins is mediated by PTK2/FAK1, a key mediator of integrin signaling events leading to the regulation of actin cytoskeleton and cell motility. Plays a critical role in TNF-induced angiogenesis, and implicated in the signaling of TEK and FLT1 receptors, 2 important receptor families essential for angiogenesis. Required for the phosphorylation and activation of STAT3, a transcription factor involved in cell differentiation. Also involved in interleukin-6 (IL6) induced differentiation. Also plays a role in programming adaptive cytoprotection against extracellular stress in different cell systems, salivary epithelial cells, brain endothelial cells, and dermal fibroblasts. May be involved in regulation of endocytosis through its interaction with an endosomal protein RUFY1. May also play a role in the growth and differentiation of hematopoietic cells; as well as in signal transduction in endocardial and arterial endothelial cells. This Mus musculus (Mouse) protein is Cytoplasmic tyrosine-protein kinase BMX (Bmx).